Here is a 62-residue protein sequence, read N- to C-terminus: Prokaryotic ubiquitin-like protein Pup 2 (62 aa).

The interval 1–34 is disordered; the sequence is MRQEKPKRHGREDDEPPEPAPAGRARDTTVGDDT. The segment at 21 to 56 is ARC ATPase binding; the sequence is PAGRARDTTVGDDTDELLDEIDGVLEENAVEFVRSY. Glu-62 participates in a covalent cross-link: Isoglutamyl lysine isopeptide (Glu-Lys) (interchain with K-? in acceptor proteins).

The protein belongs to the prokaryotic ubiquitin-like protein family. Strongly interacts with the proteasome-associated ATPase ARC through a hydrophobic interface; the interacting region of Pup lies in its C-terminal half. There is one Pup binding site per ARC hexamer ring.

It functions in the pathway protein degradation; proteasomal Pup-dependent pathway. Functionally, protein modifier that is covalently attached to lysine residues of substrate proteins, thereby targeting them for proteasomal degradation. The tagging system is termed pupylation. The polypeptide is Prokaryotic ubiquitin-like protein Pup 2 (Saccharopolyspora erythraea (strain ATCC 11635 / DSM 40517 / JCM 4748 / NBRC 13426 / NCIMB 8594 / NRRL 2338)).